The primary structure comprises 509 residues: Cytochrome P450 monooxygenase ARMGADRAFT_974139 (509 aa).

A helical transmembrane segment spans residues 4 to 24 (ASLAVVVWAILLVLWLRRIFG). 2 N-linked (GlcNAc...) asparagine glycosylation sites follow: Asn-96 and Asn-279. Cys-439 is a binding site for heme.

This sequence belongs to the cytochrome P450 family. Heme serves as cofactor.

The protein localises to the membrane. It participates in secondary metabolite biosynthesis. Its function is as follows. Cytochrome P450 monooxygenase, part of the gene cluster that mediates the biosynthesis of melleolides, a range of antifungal and phytotoxic polyketide derivatives composed of an orsellinic acid (OA) moiety esterified to various sesquiterpene alcohols. The first step in melleolides biosynthesis is performed by the delta(6)-protoilludene synthase PRO1 which catalyzes the cyclization of farnesyl diphosphate to protoilludene. The orsellinic acid synthase armB produces OA by condensing acetyl-CoA with 3 malonyl-CoA units in a three-round chain elongation reaction folowed by a C2-C7 ring closure. ArmB further catalyzes the trans-esterification of OA to the various sesquiterpene alcohols resulting from the hydroxylation of protoilludene. The melleolides cluster also includes 5 cytochrome P450 monooxygenases, 4 NAD(+)-dependent oxidoreductases, one flavin-dependent oxidoreductase, and one O-methyltransferase. The cytochrome P450 monooxygenases may be involved in protoilludene hydroxylation to elaborate melleolides with multiple alcohol groups, such as melleolide D, which carries alcohol functionalities at C-4, C-5, C-10, and C-13. The role of the NAD(+)-dependent enzymes remains unknown. Numerous melleolides, including arnamial, show 5'-O-methylation of the aromatic moiety which may be catalyzed by the methyltransferase encoded in the cluster. The flavin-dependent oxidoreductase might represent the dehydrogenase yielding the aldehyde in position 1 of arnamial and other melleolides. Finally, several halogenase localized outside of the cluster, are able to catalyze the transfer of a single chlorine atom to the melleolide backbone, resulting in a 6'-chloromelleolide product. The polypeptide is Cytochrome P450 monooxygenase ARMGADRAFT_974139 (Armillaria gallica (Bulbous honey fungus)).